The following is a 284-amino-acid chain: UPF0354 protein SERP1303 (284 aa).

The protein belongs to the UPF0354 family.

The sequence is that of UPF0354 protein SERP1303 from Staphylococcus epidermidis (strain ATCC 35984 / DSM 28319 / BCRC 17069 / CCUG 31568 / BM 3577 / RP62A).